A 452-amino-acid polypeptide reads, in one-letter code: Coproporphyrinogen III oxidase (452 aa).

Residues 10–15, 36–37, 58–61, valine 242, tryptophan 390, and 426–428 contribute to the FAD site; these read GGGISG, EP, GAEA, and IGV.

The protein belongs to the protoporphyrinogen/coproporphyrinogen oxidase family. Coproporphyrinogen III oxidase subfamily. It depends on FAD as a cofactor.

Its subcellular location is the cytoplasm. It catalyses the reaction coproporphyrinogen III + 3 O2 = coproporphyrin III + 3 H2O2. It functions in the pathway porphyrin-containing compound metabolism; protoheme biosynthesis. Involved in coproporphyrin-dependent heme b biosynthesis. Catalyzes the oxidation of coproporphyrinogen III to coproporphyrin III. This is Coproporphyrinogen III oxidase from Mycobacterium bovis (strain ATCC BAA-935 / AF2122/97).